Reading from the N-terminus, the 241-residue chain is Ribonuclease PH (241 aa).

Phosphate-binding positions include Arg-87 and Gly-125–Arg-127.

Belongs to the RNase PH family. Homohexameric ring arranged as a trimer of dimers.

It carries out the reaction tRNA(n+1) + phosphate = tRNA(n) + a ribonucleoside 5'-diphosphate. Its function is as follows. Phosphorolytic 3'-5' exoribonuclease that plays an important role in tRNA 3'-end maturation. Removes nucleotide residues following the 3'-CCA terminus of tRNAs; can also add nucleotides to the ends of RNA molecules by using nucleoside diphosphates as substrates, but this may not be physiologically important. Probably plays a role in initiation of 16S rRNA degradation (leading to ribosome degradation) during starvation. The sequence is that of Ribonuclease PH from Salinispora tropica (strain ATCC BAA-916 / DSM 44818 / JCM 13857 / NBRC 105044 / CNB-440).